Consider the following 282-residue polypeptide: WRKY transcription factor 71 (282 aa).

The interval 63–121 is disordered; the sequence is LTSNSPVVSSSSNEGEPKENTNDKSDQMEDNEGDLHGVGESSKQLTKQGKKKGEKKERE. Over residues 65 to 75 the composition is skewed to low complexity; the sequence is SNSPVVSSSSN. The segment covering 77-99 has biased composition (basic and acidic residues); sequence GEPKENTNDKSDQMEDNEGDLHG. A DNA-binding region (WRKY) is located at residues 130–195; that stretch reads SEIDHLEDGY…YEGKHNHPIP (66 aa).

Belongs to the WRKY group II-c family.

The protein localises to the nucleus. Its function is as follows. Transcription factor. Interacts specifically with the W box (5'-(T)TGAC[CT]-3'), a frequently occurring elicitor-responsive cis-acting element. This chain is WRKY transcription factor 71 (WRKY71), found in Arabidopsis thaliana (Mouse-ear cress).